A 215-amino-acid polypeptide reads, in one-letter code: MNNTYPHPIIAREGWPYLGGIFIVTLIVHAAAGLGWAWPFWLLTVFVLQFFRDPARTVPTQANAILSPADGRIVAVEQVRDPYADRDALKISVFMNVFNVHSNRAPVDGTVQQVQYFPGKFVNADLDKASLENERNAVVLRRADGQVVTSVQVAGLIARRILCYTKVGETLARGQRYGFIRFGSRVDVYLPLTARPRVTIGEKVSATLTVLAELD.

Residue serine 184 is the Schiff-base intermediate with substrate; via pyruvic acid of the active site. Serine 184 carries the pyruvic acid (Ser); by autocatalysis modification.

Belongs to the phosphatidylserine decarboxylase family. PSD-A subfamily. Heterodimer of a large membrane-associated beta subunit and a small pyruvoyl-containing alpha subunit. Requires pyruvate as cofactor. Post-translationally, is synthesized initially as an inactive proenzyme. Formation of the active enzyme involves a self-maturation process in which the active site pyruvoyl group is generated from an internal serine residue via an autocatalytic post-translational modification. Two non-identical subunits are generated from the proenzyme in this reaction, and the pyruvate is formed at the N-terminus of the alpha chain, which is derived from the carboxyl end of the proenzyme. The post-translation cleavage follows an unusual pathway, termed non-hydrolytic serinolysis, in which the side chain hydroxyl group of the serine supplies its oxygen atom to form the C-terminus of the beta chain, while the remainder of the serine residue undergoes an oxidative deamination to produce ammonia and the pyruvoyl prosthetic group on the alpha chain.

Its subcellular location is the cell membrane. It carries out the reaction a 1,2-diacyl-sn-glycero-3-phospho-L-serine + H(+) = a 1,2-diacyl-sn-glycero-3-phosphoethanolamine + CO2. The protein operates within phospholipid metabolism; phosphatidylethanolamine biosynthesis; phosphatidylethanolamine from CDP-diacylglycerol: step 2/2. Catalyzes the formation of phosphatidylethanolamine (PtdEtn) from phosphatidylserine (PtdSer). This chain is Phosphatidylserine decarboxylase proenzyme, found in Ralstonia nicotianae (strain ATCC BAA-1114 / GMI1000) (Ralstonia solanacearum).